The following is a 190-amino-acid chain: Threonylcarbamoyl-AMP synthase (190 aa).

Residues 7–190 enclose the YrdC-like domain; it reads TGSIAAVVDL…ALTGELFRQG (184 aa).

Belongs to the SUA5 family. TsaC subfamily.

The protein localises to the cytoplasm. It catalyses the reaction L-threonine + hydrogencarbonate + ATP = L-threonylcarbamoyladenylate + diphosphate + H2O. Required for the formation of a threonylcarbamoyl group on adenosine at position 37 (t(6)A37) in tRNAs that read codons beginning with adenine. Catalyzes the conversion of L-threonine, HCO(3)(-)/CO(2) and ATP to give threonylcarbamoyl-AMP (TC-AMP) as the acyladenylate intermediate, with the release of diphosphate. This is Threonylcarbamoyl-AMP synthase from Salmonella paratyphi A (strain ATCC 9150 / SARB42).